The primary structure comprises 156 residues: Peroxisomal membrane associated protein 20 (156 aa).

In terms of domain architecture, Thioredoxin spans 2 to 156 (VAVGSTLPKV…SSADKVLSSL (155 aa)). The Cysteine sulfenic acid (-SOH) intermediate role is filled by Cys-43.

It belongs to the peroxiredoxin family. Prx5 subfamily. In terms of assembly, homodimer; disulfide-linked, upon oxidation.

The protein resides in the cytoplasm. Its subcellular location is the nucleus. Functionally, may act as a chaperone rather than a peroxidase. Has no thioredoxin-dependent peroxidase activity. Shows weak chaperone activity. This is Peroxisomal membrane associated protein 20 from Schizosaccharomyces pombe (strain 972 / ATCC 24843) (Fission yeast).